The primary structure comprises 311 residues: Malate dehydrogenase (311 aa).

Residues 7–13 (GAAGGIG) and D34 contribute to the NAD(+) site. Substrate-binding residues include R81 and R87. Residues N94 and 117–119 (ITN) contribute to the NAD(+) site. Substrate contacts are provided by N119 and R153. Catalysis depends on H177, which acts as the Proton acceptor. M227 is a binding site for NAD(+).

Belongs to the LDH/MDH superfamily. MDH type 1 family. Homodimer.

The enzyme catalyses (S)-malate + NAD(+) = oxaloacetate + NADH + H(+). Catalyzes the reversible oxidation of malate to oxaloacetate. The polypeptide is Malate dehydrogenase (Erwinia tasmaniensis (strain DSM 17950 / CFBP 7177 / CIP 109463 / NCPPB 4357 / Et1/99)).